A 35-amino-acid polypeptide reads, in one-letter code: Protein YbgU (35 aa).

This is Protein YbgU from Escherichia coli (strain K12).